Here is a 324-residue protein sequence, read N- to C-terminus: NADH-ubiquinone oxidoreductase chain 1 (324 aa).

8 helical membrane passes run 9–29, 75–95, 106–126, 146–166, 177–197, 237–257, 259–279, and 299–319; these read VLNPLAYIVPVLLAVAFLTLL, FLFLATPMLALTLALTLWAPM, LGVLFVLALSSLAVYSILGSG, ISYEVSLGLILLSVIIFTGGF, SIWLVVPAWPLAALWYISTLA, ILLMNTLSAILFLGATHIPAL, ELTAMNLMTKAALLSVVFLWV, and FLPMTLALVLWHLALPIALAG.

It belongs to the complex I subunit 1 family.

It localises to the mitochondrion inner membrane. It catalyses the reaction a ubiquinone + NADH + 5 H(+)(in) = a ubiquinol + NAD(+) + 4 H(+)(out). Functionally, core subunit of the mitochondrial membrane respiratory chain NADH dehydrogenase (Complex I) that is believed to belong to the minimal assembly required for catalysis. Complex I functions in the transfer of electrons from NADH to the respiratory chain. The immediate electron acceptor for the enzyme is believed to be ubiquinone. This is NADH-ubiquinone oxidoreductase chain 1 (MT-ND1) from Thymallus arcticus (Arctic grayling).